Reading from the N-terminus, the 176-residue chain is Large ribosomal subunit protein uL6 (176 aa).

Over residues 151–170 (RPPEPYKGKGVRYADEQVRR) the composition is skewed to basic and acidic residues. The disordered stretch occupies residues 151 to 176 (RPPEPYKGKGVRYADEQVRRKEAKKK).

Belongs to the universal ribosomal protein uL6 family. As to quaternary structure, part of the 50S ribosomal subunit.

In terms of biological role, this protein binds to the 23S rRNA, and is important in its secondary structure. It is located near the subunit interface in the base of the L7/L12 stalk, and near the tRNA binding site of the peptidyltransferase center. This Shewanella loihica (strain ATCC BAA-1088 / PV-4) protein is Large ribosomal subunit protein uL6.